Consider the following 147-residue polypeptide: Large ribosomal subunit protein uL15 (147 aa).

The span at 1–11 (MKLHDLRPAKD) shows a compositional bias: basic and acidic residues. A disordered region spans residues 1–57 (MKLHDLRPAKDAKKKRKRVGRGTGSGRGFTSGRGSKGQNARSGGGVRPTFEGGQTPL). Residues 21–35 (RGTGSGRGFTSGRGS) show a composition bias toward gly residues.

Belongs to the universal ribosomal protein uL15 family. As to quaternary structure, part of the 50S ribosomal subunit.

Functionally, binds to the 23S rRNA. This chain is Large ribosomal subunit protein uL15, found in Halothermothrix orenii (strain H 168 / OCM 544 / DSM 9562).